The chain runs to 292 residues: RNA 5'-monophosphate methyltransferase (292 aa).

Residues 1 to 20 (MAVPTELHGGSVKETAAEKE) form a disordered region. Residues R46, N76, D110, 135 to 136 (DF), and M164 contribute to the S-adenosyl-L-methionine site. One can recognise a Bin3-type SAM domain in the interval 53–274 (ELLRQLFPES…KQTIETHPIP (222 aa)).

The protein belongs to the methyltransferase superfamily. As to quaternary structure, interacts with DICER1; the interaction may be mediated by RNA.

It is found in the cytoplasm. The catalysed reaction is a 5'-end 5'-phospho-ribonucleoside-RNA + S-adenosyl-L-methionine = a 5'-end (5'-methylphospho)-ribonucleoside-RNA + S-adenosyl-L-homocysteine. It carries out the reaction a 5'-end 5'-phospho-ribonucleoside-RNA + 2 S-adenosyl-L-methionine = a 5'-end (5'-bismethylphospho)-ribonucleoside-RNA + 2 S-adenosyl-L-homocysteine. O-methyltransferase that specifically monomethylates 5'-monophosphate of cytoplasmic histidyl tRNA (tRNA(His)), acting as a capping enzyme by protecting tRNA(His) from cleavage by DICER1. Also able, with less efficiently, to methylate the 5' monophosphate of a subset of pre-miRNAs, acting as a negative regulator of miRNA processing. The 5' monophosphate of pre-miRNAs is recognized by DICER1 and is required for pre-miRNAs processing: methylation at this position reduces the processing of pre-miRNAs by DICER1. Was also reported to mediate dimethylation of pre-miR-145; however dimethylation cannot be reproduced by another group which observes a monomethylation of pre-miR-145. This chain is RNA 5'-monophosphate methyltransferase (BCDIN3D), found in Pongo abelii (Sumatran orangutan).